A 260-amino-acid chain; its full sequence is Dehydrogenase/reductase SDR family member 11 (260 aa).

Residues 1–30 (MARPGMERWRDRLALVTGASGGIGAAVARA) form the signal peptide. NADP(+)-binding positions include 18–23 (GASGGI), 43–44 (RT), Glu-49, 70–71 (DL), and Asn-97. Substrate contacts are provided by Ser-151 and Tyr-166. NADP(+) is bound by residues Tyr-166, Lys-170, 201–204 (VETQ), and Lys-208. Tyr-166 functions as the Proton acceptor in the catalytic mechanism.

Belongs to the short-chain dehydrogenases/reductases (SDR) family. Homotetramer. As to expression, isoform 1: Ubiquitously expressed, with highest levels in testis, small intestine, colon, kidney, brain and heart. Isoform 3: Expressed in brain, heart and skeletal muscle.

The protein localises to the secreted. It carries out the reaction a 3beta-hydroxysteroid + NADP(+) = a 3-oxosteroid + NADPH + H(+). It catalyses the reaction 17beta-estradiol + NAD(+) = estrone + NADH + H(+). The catalysed reaction is 17beta-estradiol + NADP(+) = estrone + NADPH + H(+). It participates in steroid biosynthesis; estrogen biosynthesis. With respect to regulation, inhibited by flavonoids including apigenin, luteolin, genistein, kaempferol and quercetin and also by carbenoxolone, zearalenone, glycyrrhetinic, curcumin and flufenamic acid. In terms of biological role, catalyzes the conversion of the 17-keto group of estrone, 4- and 5-androstenes and 5-alpha-androstanes into their 17-beta-hydroxyl metabolites and the conversion of the 3-keto group of 3-, 3,17- and 3,20- diketosteroids into their 3-hydroxyl metabolites. Exhibits reductive 3-beta-hydroxysteroid dehydrogenase activity toward 5-beta-androstanes, 5-beta-pregnanes, 4-pregnenes and bile acids. May also reduce endogenous and exogenous alpha-dicarbonyl compounds and xenobiotic alicyclic ketones. The polypeptide is Dehydrogenase/reductase SDR family member 11 (DHRS11) (Homo sapiens (Human)).